Here is a 62-residue protein sequence, read N- to C-terminus: uncharacterized protein (62 aa).

This is an uncharacterized protein from Sinorhizobium fredii (strain NBRC 101917 / NGR234).